The chain runs to 430 residues: Cysteate synthase (430 aa).

Lysine 106 bears the N6-(pyridoxal phosphate)lysine mark. Residues asparagine 132 and threonine 381 each coordinate pyridoxal 5'-phosphate.

The protein belongs to the threonine synthase family. Cysteate synthase subfamily. Homotrimer. The cofactor is pyridoxal 5'-phosphate.

It catalyses the reaction O-phospho-L-serine + sulfite + H(+) = L-cysteate + phosphate. The protein operates within cofactor biosynthesis; coenzyme M biosynthesis. Its function is as follows. Specifically catalyzes the beta-elimination of phosphate from L-phosphoserine and the beta-addition of sulfite to the dehydroalanine intermediate to produce L-cysteate. The polypeptide is Cysteate synthase (Methanoculleus marisnigri (strain ATCC 35101 / DSM 1498 / JR1)).